The following is a 903-amino-acid chain: Protein translocase subunit SecA (903 aa).

Residues Gln-89, 107–111, and Asp-502 each bind ATP; that span reads GEGKT. Zn(2+) is bound by residues Cys-886, Cys-888, Cys-897, and His-898.

This sequence belongs to the SecA family. As to quaternary structure, monomer and homodimer. Part of the essential Sec protein translocation apparatus which comprises SecA, SecYEG and auxiliary proteins SecDF-YajC and YidC. Zn(2+) is required as a cofactor.

It is found in the cell inner membrane. It localises to the cytoplasm. The enzyme catalyses ATP + H2O + cellular proteinSide 1 = ADP + phosphate + cellular proteinSide 2.. Functionally, part of the Sec protein translocase complex. Interacts with the SecYEG preprotein conducting channel. Has a central role in coupling the hydrolysis of ATP to the transfer of proteins into and across the cell membrane, serving both as a receptor for the preprotein-SecB complex and as an ATP-driven molecular motor driving the stepwise translocation of polypeptide chains across the membrane. This Sinorhizobium medicae (strain WSM419) (Ensifer medicae) protein is Protein translocase subunit SecA.